The following is a 1857-amino-acid chain: MLQSGGIKGPQRKQFQPASAEARSMRATIASLQDSKVDSARPDSPQYSPKSPSKRSCTLWVHDETFSREEVLCNLQALPDFGLNVGYLVEVSVAQGDHLGSQLKPEAGSRYLQDEGSFTSPRWPIGAGGSASRSTFGGDAKLRSRKTPGKFLFIVKPFPPEVRAKHPNLQVSVANHVANAFGFKNRSQIHLTVRKRAQCSASHVELIFRDQFLLRSDMWRLTMSELVDRPIYKGQKILFMGSIKATVKSVYISGNKTLSAYFSPNTIPIFRSESARFVLFIQMSKEMWDFDSEGTGDILFSRVINSLMPELFKRWANIDAHHLVTIVLFTRVQYDFATPTSGPATLNSSFLNRGPDGSAPKTQDFYRVVVNDMPSGQWTTILDSLKKEFRTFLRDVSIPPPYFPDTPIAAEDIPRFTESHPPKIAGRPTSALRGNILEAIHVASSYLAFEHIGRDLVRTGTSIVIITPGTGVFEVPFKILSLTSDVLTSRAIGIDLICLSPMPLHSVPLFKYKLPRDTSCRPGSSISSRLAPYEHRRMSATFSTAHMSPLDRPGTALSDQALQGIGSSPQEEEWGYGIPHWVDISYWDPKLDRASRAAAKKKTTMSPVIATIAKNSQLFVPKVRMYEIQMMGVMESEQSNISIPHMSSTSSRTQKRPGTLASLAASIGNSPSPDSSYRSQAGDGFRPKSFMYNIKDSKKSMLPPDAKERTNLVEWMDSYDQSIFHLHPKQKRPRRRSKAKQAAETETSRPSQHETPKLRSSMDLGQPDNRHLSPFGQPHLQLRYERIEEESLVTPRRITQPPTQTNMKSIMKPKPKLPIPRISRSISFALRGLGSAPPRAHASTEVKTEHAQALPTSGGRTPEDPASEASNTVTPRQNSPLNSGAATPKPERSEADAPSNVEAMTPSKPILIRAIRRTGEDGSVEPLPLEGSFSTQGTEPRHDLLQHHDSQGAFPVKRTGRRLDLLSSGDPTSPPTVSATDALSPWVSPINPWNPPKLAPSRSSWYGRWQHVYPRIPKTTSVKWKSLKSPASLPITAEELPTESELTSNFLQTPYRVYQNDEADAEVPKTREMLLRDMISLRLSHGFQIVVGKKVEEQSTGYSNIFDTNALSKDGTTVFMARGNVIHRLVCVEGEIEVTKFTRRPLNGFPTDELNDASISYSPAVKTILSAQYCKNTISLGAPPEEYNWNSADAFLAGHRDHITNSIRQLRFWRTRFVLIPVQVPLAARRHISSFHEDNEEEIHLLGIYKLTQMWQRHRYIPPEERQFQSAARKSKDQNPLNIIYQTSDPSVVVAAELDRLLLEDPGLDNAPAQLLPDSELLQRYNITLAFLAQKIQGEKGVRMMDRRWHWRLHYNCFVGMEFTTWLLQNFRDIDTREEAVEFGNDLMTHGLFHHVQRRHNFRDGNYFYQIADEYRVVRPESRGGWFQPRKVDKSNPNTPMGEAMKDSASSIRARAEKSIDETGSKLDIPGSSKPSRPKPSISLAKSLKYDVDPRKRSDRPEVIDLHYDRIHNPENCFHIELSWMNATPKLVEDAIMSWVGTAEKYGLKLVELPISEASSIVERQVFRRPYPIKLKVDPPPTPVSTYLTATSFTSQAVPDHHFYQKAILKKFDFVLDFEAKSAFPANVDVCYSWGKPDYQFPQYVHRTGAVLAQITDEGHFLLLANRFHNSHNPVSLKDSNKFDRSSEYFPRPRAATFDPLDRRSPLLSPVARPTPGTDSSIPSASPPYISASDASQNSYRVTDQIKDSMRAFCSDAEQLEAFFAEMAMAKGKTATTAGPASLSSVKLSPTTPATVDSSIPSLELPASVVARNLHLPQPVALAAAQASAETPQVAGSIDAVMRSTSVSSPRNGAFRH.

Disordered regions lie at residues 1 to 55, 639 to 690, 724 to 777, 799 to 818, and 833 to 943; these read MLQS…PSKR, SNIS…PKSF, FHLH…PFGQ, TQPP…PKLP, and LGSA…PRHD. 3 stretches are compositionally biased toward polar residues: residues 45-55, 639-652, and 667-679; these read PQYSPKSPSKR, SNIS…TSSR, and IGNS…SYRS. The span at 726–739 shows a compositional bias: basic residues; sequence LHPKQKRPRRRSKA. The segment covering 741-757 has biased composition (basic and acidic residues); that stretch reads QAAETETSRPSQHETPK. Polar residues predominate over residues 868–885; it reads EASNTVTPRQNSPLNSGA. The DEP domain maps to 1338-1413; the sequence is GEKGVRMMDR…DGNYFYQIAD (76 aa). Disordered regions lie at residues 1426–1496 and 1711–1730; these read WFQP…DPRK and VARP…PPYI. Over residues 1454-1465 the composition is skewed to basic and acidic residues; it reads ARAEKSIDETGS. Composition is skewed to low complexity over residues 1469–1483 and 1719–1730; these read IPGS…PSIS and DSSIPSASPPYI.

It belongs to the IML1 family.

It localises to the vacuole membrane. This is Vacuolar membrane-associated protein IML1 (IML1) from Coccidioides immitis (strain RS) (Valley fever fungus).